The primary structure comprises 174 residues: Methylamine utilization protein MauL (174 aa).

The protein operates within one-carbon metabolism; methylamine degradation. Its function is as follows. Probably involved in TTQ prosthetic group biosynthesis. This chain is Methylamine utilization protein MauL (mauL), found in Methylophilus methylotrophus (Bacterium W3A1).